Here is a 1020-residue protein sequence, read N- to C-terminus: Sodium/potassium-transporting ATPase subunit alpha-2 (1020 aa).

A propeptide spanning residues 1 to 5 is cleaved from the precursor; the sequence is MGRGA. Residues 1 to 31 form a disordered region; that stretch reads MGRGAGREYSPAATTAENGGGKKKQKEKELD. Topologically, residues 6–85 are cytoplasmic; that stretch reads GREYSPAATT…NALTPPPTTP (80 aa). The residue at position 10 (Ser-10) is a Phosphoserine. The interval 80–82 is interaction with phosphoinositide-3 kinase; sequence PPP. A helical membrane pass occupies residues 86–106; the sequence is EWVKFCRQLFGGFSILLWIGA. Topologically, residues 107–129 are extracellular; that stretch reads LLCFLAYGILAAMEDEPSNDNLY. A helical transmembrane segment spans residues 130–150; it reads LGIVLAAVVIVTGCFSYYQEA. Residues 151-286 lie on the Cytoplasmic side of the membrane; the sequence is KSSKIMDSFK…VGQTPIAMEI (136 aa). A compositionally biased stretch (polar residues) spans 212-227; it reads DNSSLTGESEPQTRSP. The disordered stretch occupies residues 212 to 231; it reads DNSSLTGESEPQTRSPEFTH. A helical membrane pass occupies residues 287–306; the sequence is EHFIQLITGVAVFLGVSFFV. At 307–318 the chain is on the extracellular side; that stretch reads LSLILGYSWLEA. Residues 319 to 336 form a helical membrane-spanning segment; sequence VIFLIGIIVANVPEGLLA. The Cytoplasmic portion of the chain corresponds to 337–769; sequence TVTVCLTLTA…EEGRLIFDNL (433 aa). Asp-374 functions as the 4-aspartylphosphate intermediate in the catalytic mechanism. Phosphoserine occurs at positions 439, 450, 496, and 559. A Phosphothreonine modification is found at Thr-570. Residues Ser-587 and Ser-672 each carry the phosphoserine modification. Mg(2+)-binding residues include Asp-714 and Asp-718. Residues 770 to 789 traverse the membrane as a helical segment; it reads KKSIAYTLTSNIPEITPFLL. Topologically, residues 790 to 799 are extracellular; sequence FIIANIPLPL. The chain crosses the membrane as a helical span at residues 800 to 820; it reads GTVTILCIDLGTDMVPAISLA. The Cytoplasmic segment spans residues 821 to 840; it reads YEAAESDIMKRQPRNSQTDK. At Ser-826 the chain carries Phosphoserine. The helical transmembrane segment at 841-863 threads the bilayer; sequence LVNERLISMAYGQIGMIQALGGF. Over 864-915 the chain is Extracellular; that stretch reads FTYFVILAENGFLPSRLLGIRLDWDDRTTNDLEDSYGQEWTYEQRKVVEFTC. Residues 916–935 form a helical membrane-spanning segment; it reads HTAFFASIVVVQWADLIICK. The Cytoplasmic segment spans residues 936-948; it reads TRRNSVFQQGMKN. A Phosphoserine; by PKA modification is found at Ser-940. The helical transmembrane segment at 949–967 threads the bilayer; sequence KILIFGLLEETALAAFLSY. Residues 968–982 lie on the Extracellular side of the membrane; sequence CPGMGVALRMYPLKV. A helical membrane pass occupies residues 983-1003; it reads TWWFCAFPYSLLIFIYDEVRK. Residues 1004 to 1020 lie on the Cytoplasmic side of the membrane; it reads LILRRYPGGWVEKETYY.

Belongs to the cation transport ATPase (P-type) (TC 3.A.3) family. Type IIC subfamily. As to quaternary structure, the sodium/potassium-transporting ATPase is composed of a catalytic alpha subunit, an auxiliary non-catalytic beta subunit and an additional regulatory subunit. Interacts with regulatory subunit FXYD1.

The protein localises to the membrane. The protein resides in the cell membrane. The enzyme catalyses K(+)(out) + Na(+)(in) + ATP + H2O = K(+)(in) + Na(+)(out) + ADP + phosphate + H(+). In terms of biological role, this is the catalytic component of the active enzyme, which catalyzes the hydrolysis of ATP coupled with the exchange of sodium and potassium ions across the plasma membrane. This action creates the electrochemical gradient of sodium and potassium ions, providing the energy for active transport of various nutrients. This is Sodium/potassium-transporting ATPase subunit alpha-2 (Atp1a2) from Mus musculus (Mouse).